Here is a 328-residue protein sequence, read N- to C-terminus: Delta(3,5)-Delta(2,4)-dienoyl-CoA isomerase, mitochondrial (328 aa).

A mitochondrion-targeting transit peptide spans 1 to 26 (MAAGIVASRRLRDLLTRRLTASNYPG). Residues 116 to 120 (AGVDL) and glycine 174 contribute to the substrate site. Lysine 231 bears the N6-succinyllysine mark. Position 268 is a phosphoserine (serine 268). The Microbody targeting signal motif lies at 326–328 (SKL). At lysine 327 the chain carries N6-acetyllysine.

It belongs to the enoyl-CoA hydratase/isomerase family. As to quaternary structure, homohexamer.

The protein resides in the mitochondrion. The protein localises to the peroxisome. The catalysed reaction is (3E,5Z)-octadienoyl-CoA = (2E,4E)-octadienoyl-CoA. It catalyses the reaction (3E,5Z,8Z,11Z,14Z)-eicosapentaenoyl-CoA = (2E,4E,8Z,11Z,14Z)-eicosapentaenoyl-CoA. It participates in lipid metabolism; fatty acid beta-oxidation. Functionally, isomerization of 3-trans,5-cis-dienoyl-CoA to 2-trans,4-trans-dienoyl-CoA. This Pongo abelii (Sumatran orangutan) protein is Delta(3,5)-Delta(2,4)-dienoyl-CoA isomerase, mitochondrial (ECH1).